The following is a 76-amino-acid chain: Acyl carrier protein (76 aa).

The 76-residue stretch at 1–76 (MSIEERVKKI…SAIDYVQNNQ (76 aa)) folds into the Carrier domain. The residue at position 36 (Ser-36) is an O-(pantetheine 4'-phosphoryl)serine.

The protein belongs to the acyl carrier protein (ACP) family. In terms of processing, 4'-phosphopantetheine is transferred from CoA to a specific serine of apo-ACP by AcpS. This modification is essential for activity because fatty acids are bound in thioester linkage to the sulfhydryl of the prosthetic group.

It localises to the cytoplasm. Its pathway is lipid metabolism; fatty acid biosynthesis. Carrier of the growing fatty acid chain in fatty acid biosynthesis. This is Acyl carrier protein from Histophilus somni (strain 129Pt) (Haemophilus somnus).